We begin with the raw amino-acid sequence, 327 residues long: Ribosomal RNA small subunit methyltransferase H (327 aa).

Residues 37 to 39, Asp-55, Phe-82, Asp-99, and Gln-106 contribute to the S-adenosyl-L-methionine site; that span reads GGY. The disordered stretch occupies residues 303–327; it reads IATRTDAPAQPVAPETLGLPQLEGF.

This sequence belongs to the methyltransferase superfamily. RsmH family.

It localises to the cytoplasm. It catalyses the reaction cytidine(1402) in 16S rRNA + S-adenosyl-L-methionine = N(4)-methylcytidine(1402) in 16S rRNA + S-adenosyl-L-homocysteine + H(+). Functionally, specifically methylates the N4 position of cytidine in position 1402 (C1402) of 16S rRNA. The polypeptide is Ribosomal RNA small subunit methyltransferase H (Jannaschia sp. (strain CCS1)).